The sequence spans 551 residues: Glucans biosynthesis protein D (551 aa).

A signal peptide (tat-type signal) is located at residues 1–32 (MNRRRFIKGSMAMAAVCGSSGIASLFSQAAFA).

This sequence belongs to the OpgD/OpgG family. In terms of processing, predicted to be exported by the Tat system. The position of the signal peptide cleavage has not been experimentally proven.

It is found in the periplasm. Its pathway is glycan metabolism; osmoregulated periplasmic glucan (OPG) biosynthesis. Probably involved in the control of the structural glucose backbone of osmoregulated periplasmic glucans (OPGs). The sequence is that of Glucans biosynthesis protein D from Salmonella enteritidis PT4 (strain P125109).